Consider the following 332-residue polypeptide: Opticin (332 aa).

An N-terminal signal peptide occupies residues 1–19; that stretch reads MRLLAFLSLLALVLQETGT. The interval 21–41 is disordered; it reads SLPRKERKRREEQMPREGDSF. The span at 29–39 shows a compositional bias: basic and acidic residues; that stretch reads RREEQMPREGD. Residues Tyr65 and Tyr71 each carry the sulfotyrosine modification. The tract at residues 86–106 is disordered; the sequence is ATSISPAKSTTAPGTPSSNPT. Residues 116–153 form the LRRNT domain; sequence LLSSQPNHGLPTCLVCVCLGSSVYCDDIDLEDIPPLPR. Tyr139 bears the Sulfotyrosine mark. LRR repeat units follow at residues 154-175, 178-199, 202-223, 248-269, 270-290, and 300-320; these read RTAY…DFKG, KLKR…AFRL, ALQD…PSGI, KLQF…LPLS, LRSV…VFCD, and QLED…PSAY. The cysteines at positions 289 and 322 are disulfide-linked. Asn312 carries N-linked (GlcNAc...) asparagine glycosylation.

This sequence belongs to the small leucine-rich proteoglycan (SLRP) family. SLRP class III subfamily. Homodimer. O-glycosylated. In terms of processing, proteolytically cleaved by MMP1, MMP2, MMP3, MMP7, MMP8, MMP9, ADAMTS4, and ADAMTS5. Proteolytically cleaved by MMP13. The degradation of OPTC by proteases may contribute to osteoarthritis pathophysiology. Post-translationally, sulfated on tyrosine residues. In terms of tissue distribution, expressed in cartilage and synovial membranes (at protein level). Expressed in the retina, iris, ligament, skin and fetal liver (at protein level). Expressed in the retinal pigment epithelium (at protein level). Expressed in synovial fibroblasts and subchondral bone osteoblasts.

The protein resides in the secreted. Its subcellular location is the extracellular space. It localises to the extracellular matrix. Inhibits angiogenesis in the vitreous humor of the eye, and therefore represses neovascularization. Binds collagen fibrils. May be involved in collagen fiber organization via regulation of other members of the small leucine-rich repeat proteoglycan superfamily. In Homo sapiens (Human), this protein is Opticin (OPTC).